The following is a 44-amino-acid chain: Large ribosomal subunit protein bL34 (44 aa).

It belongs to the bacterial ribosomal protein bL34 family.

This is Large ribosomal subunit protein bL34 from Ehrlichia ruminantium (strain Gardel).